A 339-amino-acid chain; its full sequence is MMQQAIDKVIRRQDLAETEMMAVMQGIMEGKVTDSQIGGFLTALRMKGETVEEITASAKVMRSKALVVEVNQPHSIDTCGTGGDQANTFNISTAVAFVAAAAGVTVVKHGNRSVSSQCGSADVLEKLGVNIDLTPKQVETCVEQVNMGFMFAPKFHQAMKYAAAARRELGVRTIFNILGPLTNPAKVKGQVLGVFDESLTEVMAQVLKELGVERGMVVHGLDGLDEITTTTKTKVSELKNGMISNYVIDPRQFDIPLTDKEDLAGGDAEKNASIILNIVKGETGGKRNMVLINAGAAIYVGNAANSLQEGIDRAAEVIDMGLALDKLNQLIKLSQELKV.

5-phospho-alpha-D-ribose 1-diphosphate-binding positions include glycine 80, 83-84, threonine 88, 90-93, 108-116, and serine 120; these read GD, NIST, and KHGNRSVSS. Glycine 80 provides a ligand contact to anthranilate. Mg(2+) is bound at residue serine 92. Asparagine 111 serves as a coordination point for anthranilate. Arginine 166 serves as a coordination point for anthranilate. 2 residues coordinate Mg(2+): aspartate 225 and glutamate 226.

It belongs to the anthranilate phosphoribosyltransferase family. As to quaternary structure, homodimer. Mg(2+) is required as a cofactor.

It carries out the reaction N-(5-phospho-beta-D-ribosyl)anthranilate + diphosphate = 5-phospho-alpha-D-ribose 1-diphosphate + anthranilate. Its pathway is amino-acid biosynthesis; L-tryptophan biosynthesis; L-tryptophan from chorismate: step 2/5. Catalyzes the transfer of the phosphoribosyl group of 5-phosphorylribose-1-pyrophosphate (PRPP) to anthranilate to yield N-(5'-phosphoribosyl)-anthranilate (PRA). This chain is Anthranilate phosphoribosyltransferase, found in Alkaliphilus metalliredigens (strain QYMF).